An 82-amino-acid chain; its full sequence is Acyl carrier protein (82 aa).

Residues 4–79 enclose the Carrier domain; it reads PEMEARLKQI…DALNYIEQKL (76 aa). Ser39 bears the O-(pantetheine 4'-phosphoryl)serine mark.

It belongs to the acyl carrier protein (ACP) family. Post-translationally, 4'-phosphopantetheine is transferred from CoA to a specific serine of apo-ACP by AcpS. This modification is essential for activity because fatty acids are bound in thioester linkage to the sulfhydryl of the prosthetic group.

Its subcellular location is the cytoplasm. Its pathway is lipid metabolism; fatty acid biosynthesis. Its function is as follows. Carrier of the growing fatty acid chain in fatty acid biosynthesis. In Roseiflexus castenholzii (strain DSM 13941 / HLO8), this protein is Acyl carrier protein.